The primary structure comprises 397 residues: 1-deoxy-D-xylulose 5-phosphate reductoisomerase (397 aa).

The NADPH site is built by Thr-10, Gly-11, Ser-12, Ile-13, Asn-39, and Asn-125. Lys-126 contributes to the 1-deoxy-D-xylulose 5-phosphate binding site. Glu-127 lines the NADPH pocket. Mn(2+) is bound at residue Asp-151. The 1-deoxy-D-xylulose 5-phosphate site is built by Ser-152, Glu-153, Ser-187, and His-210. Glu-153 lines the Mn(2+) pocket. Gly-216 contacts NADPH. Ser-223, Asn-228, Lys-229, and Glu-232 together coordinate 1-deoxy-D-xylulose 5-phosphate. Glu-232 lines the Mn(2+) pocket.

The protein belongs to the DXR family. In terms of assembly, homodimer. Mg(2+) serves as cofactor. Mn(2+) is required as a cofactor.

The enzyme catalyses 2-C-methyl-D-erythritol 4-phosphate + NADP(+) = 1-deoxy-D-xylulose 5-phosphate + NADPH + H(+). It participates in isoprenoid biosynthesis; isopentenyl diphosphate biosynthesis via DXP pathway; isopentenyl diphosphate from 1-deoxy-D-xylulose 5-phosphate: step 1/6. Catalyzes the NADPH-dependent rearrangement and reduction of 1-deoxy-D-xylulose-5-phosphate (DXP) to 2-C-methyl-D-erythritol 4-phosphate (MEP). The sequence is that of 1-deoxy-D-xylulose 5-phosphate reductoisomerase from Wigglesworthia glossinidia brevipalpis.